A 1877-amino-acid chain; its full sequence is Neuron navigator 1 (1877 aa).

At Met1 the chain carries N-acetylmethionine. The tract at residues 1–59 (MLGSSVKSVQPEVELSSGGGDEGADEPRGAGRKAAAADGRGMLPKRAKAPGGGGGMAKA) is disordered. Residues 32–41 (RKAAAADGRG) show a composition bias toward low complexity. Residues Ser90, Ser142, and Ser152 each carry the phosphoserine modification. The disordered stretch occupies residues 114 to 225 (DMAKAPKGLG…PVPSAKGQEE (112 aa)). Thr159 bears the Phosphothreonine mark. Residues Ser194 and Ser199 each carry the phosphoserine modification. Positions 205–214 (SSKAKAQKSS) are enriched in low complexity. Positions 255–280 (ESQRKRTVQNVLDLRQNLEETMSSLR) form a coiled coil. Residues 294-336 (YDSDDANPRSVSSLSNRSSPLSWRYGQSSPRLQAGDAPSVGGS) are disordered. 5 positions are modified to phosphoserine: Ser296, Ser308, Ser312, Ser362, and Ser391. Residues 301-315 (PRSVSSLSNRSSPLS) show a composition bias toward low complexity. Disordered stretches follow at residues 386–839 (KSGY…PLPS) and 892–989 (MSLP…PMSL). 2 stretches are compositionally biased toward low complexity: residues 411–425 (DESS…DASD) and 433–448 (NASS…PTAS). A phosphoserine mark is found at Ser452, Ser474, Ser476, and Ser490. Over residues 476-486 (SEEKAPKKLEY) the composition is skewed to basic and acidic residues. Over residues 503–519 (ERPESCDDSSKGGELKK) the composition is skewed to basic and acidic residues. Ser528 carries the post-translational modification Phosphoserine. Thr534 carries the post-translational modification Phosphothreonine. Residue Ser541 is modified to Phosphoserine. A Phosphothreonine modification is found at Thr544. Over residues 555–566 (GKPEGKATDKGK) the composition is skewed to basic and acidic residues. At Thr572 the chain carries Phosphothreonine. The segment covering 581–591 (AGRDRLSDAKK) has biased composition (basic and acidic residues). Polar residues-rich tracts occupy residues 615–635 (GTAT…QKSS) and 645–655 (RKTSLDVSNSA). The residue at position 648 (Ser648) is a Phosphoserine. The residue at position 688 (Arg688) is an Omega-N-methylarginine. 2 stretches are compositionally biased toward polar residues: residues 698–710 (IDPS…QGGL) and 724–733 (GRTTPAPVNQ). The stretch at 731–756 (VNQTDREKEKAKAKAVALDSDNISLK) forms a coiled coil. Phosphoserine is present on residues Ser750, Ser754, Ser760, Ser797, and Ser808. Positions 751–773 (DNISLKSIGSPESTPKNQASHPT) are enriched in polar residues. The span at 805-818 (NSNSLDLPSSSDTT) shows a compositional bias: low complexity. Pro residues predominate over residues 902–913 (TPVPTPPAPPAA). Ser1000 carries the phosphoserine modification. Thr1006 carries the phosphothreonine modification. Residues 1072–1163 (SSAEERMQSE…SEAQAVIQGA (92 aa)) adopt a coiled-coil conformation. Thr1170 carries the post-translational modification Phosphothreonine. Disordered stretches follow at residues 1172 to 1204 (KELR…KDAD), 1244 to 1306 (ATPD…EKKE), 1359 to 1383 (LKVA…LSSP), and 1810 to 1843 (KLYH…SLDS). A Phosphoserine modification is found at Ser1181. Residues 1181–1200 (SSDSISSLNSITSHSSIGSS) show a composition bias toward low complexity. Residues 1246-1264 (PDSSAPSSPKLQHGSTETA) show a composition bias toward polar residues. A Phosphoserine modification is found at Ser1265. The span at 1265–1275 (SPSIKSSTSSS) shows a compositional bias: low complexity. Positions 1303–1362 (EKKEVSELRSELWEKEMKLTDIRLEALNSAHQLDQLRETMHNMQLEVDLLKAENDRLKVA) form a coiled coil. Residues 1366 to 1383 (SSGSTPGQVPGSSALSSP) show a composition bias toward polar residues. Ser1382 is subject to Phosphoserine.

The protein belongs to the Nav/unc-53 family. In terms of assembly, interacts with tubulin. In terms of tissue distribution, broadly expressed at low levels. Expressed at high levels in heart, skeletal muscle and placenta.

It is found in the cytoplasm. It localises to the cytoskeleton. Its function is as follows. May be involved in neuronal migration. This Homo sapiens (Human) protein is Neuron navigator 1 (NAV1).